The primary structure comprises 174 residues: Regenerating islet-derived protein 3-alpha (174 aa).

The first 25 residues, 1–25 (MLPRLSFNNVSWTLLYYLFIFQVRG), serve as a signal peptide directing secretion. The propeptide occupies 26–36 (EDSQKAVPSTR). 3 disulfides stabilise this stretch: Cys39–Cys50, Cys67–Cys170, and Cys145–Cys162. One can recognise a C-type lectin domain in the interval 46-171 (YRSYCYTLVT…CDVELPFVCK (126 aa)). Positions 102 to 117 (WIWLHDPTMGQQPNGG) are sufficient to activate EXTL3. The Zn(2+) site is built by His106 and Glu120.

As to quaternary structure, forms a hexameric membrane-permeabilizing oligomeric pore on membrane phospholipids. The hexamer is formed by three dimers related by helical symmetry. Forms filaments, filamentation traps pore complexes and limits damage to host cells. Interacts with EXTL3. Post-translationally, proteolytic processing by trypsin removes an inhibitory N-terminal propeptide and is essential for peptidoglycan binding and antibacterial activity. As to expression, low expression found in healthy pancreas.

The protein localises to the secreted. In terms of biological role, bactericidal C-type lectin. The lack of the EPN motif may explain its inability to bind peptidoglycan. Functionally, acts as a hormone in response to different stimuli like anti-inflammatory signals, such as IL17A, or gut microbiome. Secreted by different cell types to activate its receptor EXTL3 and induce cell specific signaling pathways. Induced by IL17A in keratinocytes, regulates keratinocyte proliferation and differentiation after skin injury via activation of EXTL3-PI3K-AKT signaling pathway. In parallel, inhibits skin inflammation through the inhibition of inflammatory cytokines such as IL6 and TNF. In pancreas, is able to permealize beta-cells membrane and stimulate their proliferation. The protein is Regenerating islet-derived protein 3-alpha (Reg3a) of Rattus norvegicus (Rat).